We begin with the raw amino-acid sequence, 97 residues long: uncharacterized protein (97 aa).

The Stress-response A/B barrel domain maps to 2–95; the sequence is IRHLVLFKLN…EFATWVIADY (94 aa).

This is an uncharacterized protein from Streptomyces coelicolor (strain ATCC BAA-471 / A3(2) / M145).